The sequence spans 863 residues: Protein translocase subunit SecA (863 aa).

Residues glutamine 88, 106–110 (GEGKT), and aspartate 496 each bind ATP. The segment at 818–842 (EVKTEPVITKKKPARNEPCPCGSGK) is disordered. Zn(2+) is bound by residues cysteine 836, cysteine 838, cysteine 847, and cysteine 848.

It belongs to the SecA family. In terms of assembly, monomer and homodimer. Part of the essential Sec protein translocation apparatus which comprises SecA, SecYEG and auxiliary proteins SecDF-YajC and YidC. Zn(2+) serves as cofactor.

It localises to the cell inner membrane. The protein localises to the cytoplasm. It catalyses the reaction ATP + H2O + cellular proteinSide 1 = ADP + phosphate + cellular proteinSide 2.. In terms of biological role, part of the Sec protein translocase complex. Interacts with the SecYEG preprotein conducting channel. Has a central role in coupling the hydrolysis of ATP to the transfer of proteins into and across the cell membrane, serving as an ATP-driven molecular motor driving the stepwise translocation of polypeptide chains across the membrane. The polypeptide is Protein translocase subunit SecA (Nitratiruptor sp. (strain SB155-2)).